We begin with the raw amino-acid sequence, 317 residues long: Polysulfide reductase chain C (317 aa).

8 helical membrane-spanning segments follow: residues 20–40, 54–75, 98–118, 147–167, 182–202, 221–237, 259–279, and 289–309; these read IAVY…AIII, IIKA…LLIF, LGVL…LGVF, IVTF…LSAM, FLAS…LLFF, VILF…VGMY, LFWL…NVAL, and FVML…FYIL.

This sequence belongs to the NrfD family. In terms of assembly, functional polysulfide reductase is made up of three different (A, B, and C) subunits.

It is found in the cell inner membrane. In terms of biological role, could possibly serve as the membrane anchor of the enzyme. Its function is as follows. Component of the phosphorylative electron transport system with polysulfide as the terminal acceptor. The chain is Polysulfide reductase chain C (psrC) from Wolinella succinogenes (strain ATCC 29543 / DSM 1740 / CCUG 13145 / JCM 31913 / LMG 7466 / NCTC 11488 / FDC 602W) (Vibrio succinogenes).